A 371-amino-acid polypeptide reads, in one-letter code: Maltose/maltodextrin import ATP-binding protein MalK (371 aa).

The ABC transporter domain maps to 4 to 234; the sequence is VQLQNVTKAW…PADRFVAGFI (231 aa). ATP is bound at residue 36–43; it reads GPSGCGKS.

This sequence belongs to the ABC transporter superfamily. Maltooligosaccharide importer (TC 3.A.1.1.1) family. The complex is composed of two ATP-binding proteins (MalK), two transmembrane proteins (MalG and MalK) and a solute-binding protein (MalE).

The protein localises to the cell inner membrane. It carries out the reaction D-maltose(out) + ATP + H2O = D-maltose(in) + ADP + phosphate + H(+). Its function is as follows. Part of the ABC transporter complex MalEFGK involved in maltose/maltodextrin import. Responsible for energy coupling to the transport system. This is Maltose/maltodextrin import ATP-binding protein MalK from Shigella flexneri serotype 5b (strain 8401).